We begin with the raw amino-acid sequence, 621 residues long: Auxin response factor 13 (621 aa).

Residues phenylalanine 124–lysine 228 constitute a DNA-binding region (TF-B3). The region spanning arginine 508–lysine 600 is the PB1 domain.

The protein belongs to the ARF family. Homodimers and heterodimers.

It is found in the nucleus. Auxin response factors (ARFs) are transcriptional factors that bind specifically to the DNA sequence 5'-TGTCTC-3' found in the auxin-responsive promoter elements (AuxREs). Could act as transcriptional activator or repressor. Formation of heterodimers with Aux/IAA proteins may alter their ability to modulate early auxin response genes expression. The sequence is that of Auxin response factor 13 (ARF13) from Arabidopsis thaliana (Mouse-ear cress).